The primary structure comprises 141 residues: Ribosome-binding factor A (141 aa).

The interval 120–141 (SPHVQRDLQENDDQEDDSEGSL) is disordered. Over residues 129 to 141 (ENDDQEDDSEGSL) the composition is skewed to acidic residues.

It belongs to the RbfA family. Monomer. Binds 30S ribosomal subunits, but not 50S ribosomal subunits or 70S ribosomes.

Its subcellular location is the cytoplasm. Functionally, one of several proteins that assist in the late maturation steps of the functional core of the 30S ribosomal subunit. Associates with free 30S ribosomal subunits (but not with 30S subunits that are part of 70S ribosomes or polysomes). Required for efficient processing of 16S rRNA. May interact with the 5'-terminal helix region of 16S rRNA. The sequence is that of Ribosome-binding factor A from Zymomonas mobilis subsp. mobilis (strain ATCC 31821 / ZM4 / CP4).